Here is a 547-residue protein sequence, read N- to C-terminus: Chaperonin GroEL 2 (547 aa).

ATP is bound by residues 30 to 33 (TLGP), Lys-51, 87 to 91 (DGTTT), Gly-415, 479 to 481 (NAA), and Asp-495. Residues 528–547 (KPATAGLPHGGPGGFGGPEF) form a disordered region. A compositionally biased stretch (gly residues) spans 535-547 (PHGGPGGFGGPEF).

Belongs to the chaperonin (HSP60) family. Forms a cylinder of 14 subunits composed of two heptameric rings stacked back-to-back. Interacts with the co-chaperonin GroES.

Its subcellular location is the cytoplasm. It catalyses the reaction ATP + H2O + a folded polypeptide = ADP + phosphate + an unfolded polypeptide.. Together with its co-chaperonin GroES, plays an essential role in assisting protein folding. The GroEL-GroES system forms a nano-cage that allows encapsulation of the non-native substrate proteins and provides a physical environment optimized to promote and accelerate protein folding. This is Chaperonin GroEL 2 from Azoarcus sp. (strain BH72).